A 201-amino-acid chain; its full sequence is Protein Thf1 (201 aa).

Residues 174 to 201 (IYKSSISKMEQAKELIQEQRIKDKKKTL) adopt a coiled-coil conformation.

This sequence belongs to the THF1 family.

Its function is as follows. May be involved in photosynthetic membrane biogenesis. This is Protein Thf1 from Prochlorococcus marinus (strain MIT 9312).